A 697-amino-acid polypeptide reads, in one-letter code: Long-chain-fatty-acid--CoA ligase 6 (697 aa).

A helical; Signal-anchor for type III membrane protein transmembrane segment spans residues 25-45 (LSATTLVSMGALAAILAYWLT). Residues 46–697 (HRPKALQPPC…QIEELYSISM (652 aa)) are Cytoplasmic-facing.

Belongs to the ATP-dependent AMP-binding enzyme family. Mg(2+) serves as cofactor. As to expression, expressed predominantly in brain and, to a much lesser extent, in heart and adrenal.

It is found in the mitochondrion outer membrane. Its subcellular location is the peroxisome membrane. The protein localises to the microsome membrane. It localises to the endoplasmic reticulum membrane. It carries out the reaction a long-chain fatty acid + ATP + CoA = a long-chain fatty acyl-CoA + AMP + diphosphate. It catalyses the reaction (5Z,8Z,11Z,14Z)-eicosatetraenoate + ATP + CoA = (5Z,8Z,11Z,14Z)-eicosatetraenoyl-CoA + AMP + diphosphate. The catalysed reaction is 15-hydroxy-(5Z,8Z,11Z,13E)-eicosatetraenoate + ATP + CoA = 15-hydroxy-(5Z,8Z,11Z,13E)-eicosatetraenoyl-CoA + AMP + diphosphate. The enzyme catalyses 12-hydroxy-(5Z,8Z,10E,14Z)-eicosatetraenoate + ATP + CoA = 12-hydroxy-(5Z,8Z,10E,14Z)-eicosatetraenoyl-CoA + AMP + diphosphate. It carries out the reaction 5-hydroxy-(6E,8Z,11Z,14Z)-eicosatetraenoate + ATP + CoA = 5-hydroxy-(6E,8Z,11Z,14Z)-eicosatetraenoyl-CoA + AMP + diphosphate. It catalyses the reaction hexadecanoate + ATP + CoA = hexadecanoyl-CoA + AMP + diphosphate. The catalysed reaction is (E)-hexadec-2-enoate + ATP + CoA = (2E)-hexadecenoyl-CoA + AMP + diphosphate. Catalyzes the conversion of long-chain fatty acids to their active form acyl-CoA for both synthesis of cellular lipids, and degradation via beta-oxidation. Plays an important role in fatty acid metabolism in brain and the acyl-CoAs produced may be utilized exclusively for the synthesis of the brain lipid. This Rattus norvegicus (Rat) protein is Long-chain-fatty-acid--CoA ligase 6.